The chain runs to 262 residues: tRNA (guanine-N(1)-)-methyltransferase (262 aa).

S-adenosyl-L-methionine is bound by residues Gly111 and Leu130–Leu135.

It belongs to the RNA methyltransferase TrmD family. Homodimer.

It is found in the cytoplasm. It carries out the reaction guanosine(37) in tRNA + S-adenosyl-L-methionine = N(1)-methylguanosine(37) in tRNA + S-adenosyl-L-homocysteine + H(+). Its function is as follows. Specifically methylates guanosine-37 in various tRNAs. In Desulfitobacterium hafniense (strain Y51), this protein is tRNA (guanine-N(1)-)-methyltransferase.